The primary structure comprises 212 residues: Ribonuclease HII (212 aa).

The 190-residue stretch at 12–201 (ELVAGVDEVG…VRAMLEQVSI (190 aa)) folds into the RNase H type-2 domain. 3 residues coordinate a divalent metal cation: D18, E19, and D110.

The protein belongs to the RNase HII family. Requires Mn(2+) as cofactor. Mg(2+) is required as a cofactor.

The protein localises to the cytoplasm. It carries out the reaction Endonucleolytic cleavage to 5'-phosphomonoester.. Its function is as follows. Endonuclease that specifically degrades the RNA of RNA-DNA hybrids. This chain is Ribonuclease HII, found in Stutzerimonas stutzeri (strain A1501) (Pseudomonas stutzeri).